The following is a 516-amino-acid chain: Cytochrome P450 1A2 (516 aa).

O-linked (GlcNAc) serine glycosylation occurs at Ser-69. Phe-226 lines the substrate pocket. Residue Cys-458 participates in heme binding.

This sequence belongs to the cytochrome P450 family. In terms of assembly, interacts with PGRMC1; the interaction requires PGRMC1 homodimerization. It depends on heme as a cofactor.

The protein resides in the endoplasmic reticulum membrane. It localises to the microsome membrane. It catalyses the reaction an organic molecule + reduced [NADPH--hemoprotein reductase] + O2 = an alcohol + oxidized [NADPH--hemoprotein reductase] + H2O + H(+). The enzyme catalyses 17beta-estradiol + reduced [NADPH--hemoprotein reductase] + O2 = 2-hydroxy-17beta-estradiol + oxidized [NADPH--hemoprotein reductase] + H2O + H(+). The catalysed reaction is 17beta-estradiol + reduced [NADPH--hemoprotein reductase] + O2 = 4-hydroxy-17beta-estradiol + oxidized [NADPH--hemoprotein reductase] + H2O + H(+). It carries out the reaction estrone + reduced [NADPH--hemoprotein reductase] + O2 = 2-hydroxyestrone + oxidized [NADPH--hemoprotein reductase] + H2O + H(+). It catalyses the reaction estrone + reduced [NADPH--hemoprotein reductase] + O2 = 4-hydroxyestrone + oxidized [NADPH--hemoprotein reductase] + H2O + H(+). The enzyme catalyses cholesterol + reduced [NADPH--hemoprotein reductase] + O2 = 25-hydroxycholesterol + oxidized [NADPH--hemoprotein reductase] + H2O + H(+). The catalysed reaction is all-trans-retinol + reduced [NADPH--hemoprotein reductase] + O2 = all-trans-retinal + oxidized [NADPH--hemoprotein reductase] + 2 H2O + H(+). It carries out the reaction all-trans-retinal + reduced [NADPH--hemoprotein reductase] + O2 = all-trans-retinoate + oxidized [NADPH--hemoprotein reductase] + H2O + 2 H(+). It catalyses the reaction (5Z,8Z,11Z,14Z)-eicosatetraenoate + reduced [NADPH--hemoprotein reductase] + O2 = (14R,15S)-epoxy-(5Z,8Z,11Z)-eicosatrienoate + oxidized [NADPH--hemoprotein reductase] + H2O + H(+). The enzyme catalyses (5Z,8Z,11Z,14Z)-eicosatetraenoate + reduced [NADPH--hemoprotein reductase] + O2 = (14S,15R)-epoxy-(5Z,8Z,11Z)-eicosatrienoate + oxidized [NADPH--hemoprotein reductase] + H2O + H(+). The catalysed reaction is (5Z,8Z,11Z,14Z,17Z)-eicosapentaenoate + reduced [NADPH--hemoprotein reductase] + O2 = (17R,18S)-epoxy-(5Z,8Z,11Z,14Z)-eicosatetraenoate + oxidized [NADPH--hemoprotein reductase] + H2O + H(+). It carries out the reaction (4Z,7Z,10Z,13Z,16Z,19Z)-docosahexaenoate + reduced [NADPH--hemoprotein reductase] + O2 = (19R,20S)-epoxy-(4Z,7Z,10Z,13Z,16Z)-docosapentaenoate + oxidized [NADPH--hemoprotein reductase] + H2O + H(+). It catalyses the reaction (5S)-hydroperoxy-(6E,8Z,11Z,14Z)-eicosatetraenoate = 5-oxo-(6E,8Z,11Z,14Z)-eicosatetraenoate + H2O. The enzyme catalyses (12S)-hydroperoxy-(5Z,8Z,10E,14Z)-eicosatetraenoate = 12-oxo-(5Z,8Z,10E,14Z)-eicosatetraenoate + H2O. The catalysed reaction is (15S)-hydroperoxy-(5Z,8Z,11Z,13E)-eicosatetraenoate = 15-oxo-(5Z,8Z,11Z,13E)-eicosatetraenoate + H2O. It carries out the reaction (13S)-hydroperoxy-(9Z,11E)-octadecadienoate = 13-oxo-(9Z,11E)-octadecadienoate + H2O. It catalyses the reaction (5Z,8Z,11Z,14Z)-eicosatetraenoate + reduced [NADPH--hemoprotein reductase] + O2 = 13-hydroxy-(5Z,8Z,11Z,14Z)-eicosatetraenoate + oxidized [NADPH--hemoprotein reductase] + H2O + H(+). The enzyme catalyses (5Z,8Z,11Z,14Z)-eicosatetraenoate + reduced [NADPH--hemoprotein reductase] + O2 = 19-hydroxy-(5Z,8Z,11Z,14Z)-eicosatetraenoate + oxidized [NADPH--hemoprotein reductase] + H2O + H(+). The catalysed reaction is (9Z,12Z)-octadecadienoate + reduced [NADPH--hemoprotein reductase] + O2 = 11-hydroxy-(9Z,12Z)-octadecadienoate + oxidized [NADPH--hemoprotein reductase] + H2O + H(+). The protein operates within cofactor metabolism; retinol metabolism. It functions in the pathway steroid metabolism; cholesterol metabolism. Its pathway is lipid metabolism; arachidonate metabolism. In terms of biological role, a cytochrome P450 monooxygenase involved in the metabolism of various endogenous substrates, including fatty acids, steroid hormones and vitamins. Mechanistically, uses molecular oxygen inserting one oxygen atom into a substrate, and reducing the second into a water molecule, with two electrons provided by NADPH via cytochrome P450 reductase (NADPH--hemoprotein reductase). Catalyzes the hydroxylation of carbon-hydrogen bonds. Exhibits high catalytic activity for the formation of hydroxyestrogens from estrone (E1) and 17beta-estradiol (E2), namely 2-hydroxy E1 and E2. Metabolizes cholesterol toward 25-hydroxycholesterol, a physiological regulator of cellular cholesterol homeostasis. May act as a major enzyme for all-trans retinoic acid biosynthesis in the liver. Catalyzes two successive oxidative transformation of all-trans retinol to all-trans retinal and then to the active form all-trans retinoic acid. Primarily catalyzes stereoselective epoxidation of the last double bond of polyunsaturated fatty acids (PUFA), displaying a strong preference for the (R,S) stereoisomer. Catalyzes bisallylic hydroxylation and omega-1 hydroxylation of PUFA. May also participate in eicosanoids metabolism by converting hydroperoxide species into oxo metabolites (lipoxygenase-like reaction, NADPH-independent). Plays a role in the oxidative metabolism of xenobiotics. Catalyzes the N-hydroxylation of heterocyclic amines and the O-deethylation of phenacetin. Metabolizes caffeine via N3-demethylation. This is Cytochrome P450 1A2 (CYP1A2) from Macaca fuscata fuscata (Japanese macaque).